The chain runs to 217 residues: Probable transaldolase (217 aa).

The active-site Schiff-base intermediate with substrate is K83.

This sequence belongs to the transaldolase family. Type 3B subfamily.

It is found in the cytoplasm. It catalyses the reaction D-sedoheptulose 7-phosphate + D-glyceraldehyde 3-phosphate = D-erythrose 4-phosphate + beta-D-fructose 6-phosphate. It participates in carbohydrate degradation; pentose phosphate pathway; D-glyceraldehyde 3-phosphate and beta-D-fructose 6-phosphate from D-ribose 5-phosphate and D-xylulose 5-phosphate (non-oxidative stage): step 2/3. Transaldolase is important for the balance of metabolites in the pentose-phosphate pathway. This is Probable transaldolase from Erythrobacter litoralis (strain HTCC2594).